The following is a 431-amino-acid chain: POU domain, class 2, transcription factor 3 (431 aa).

3 disordered regions span residues 1–39, 130–180, and 248–267; these read MVNL…RNGL, LLPQ…EPTD, and DAES…YPTL. The region spanning 176-250 is the POU-specific domain; sequence DEPTDLEELE…LLEKWLNDAE (75 aa). Residues 251-267 are compositionally biased toward low complexity; sequence SSPSDPSASTPSSYPTL. The homeobox DNA-binding region spans 274–333; the sequence is KRKKRTSIETNIRLTLEKRFQDNPKPSSEEISMIAEQLSMEKEVVRVWFCNRRQKEKRIN. 3 stretches are compositionally biased toward low complexity: residues 352–364, 374–390, and 398–419; these read PSGS…VPPV, SSCS…PGSG, and ASQN…NSSG. The segment at 352–419 is disordered; it reads PSGSLGPLSV…SSSSSFNSSG (68 aa).

Belongs to the POU transcription factor family. Class-2 subfamily. As to quaternary structure, interacts (via the POU domain) with POU2AF1 and POU2AF2 in a DNA-dependent manner; this interaction recruits POU2AF2 to chromatin and increases POU2F3 transactivation activity. In terms of tissue distribution, skin, thymus, stomach and testis.

The protein localises to the nucleus. Its function is as follows. Transcription factor that binds to the octamer motif (5'-ATTTGCAT-3'). Regulates cell type-specific differentiation pathways. Involved in the regulation of keratinocytes differentiation. The POU2F3-POU2AF2/POU2AF3 complex drives the expression of tuft-cell-specific genes, a rare chemosensory cells that coordinate immune and neural functions within mucosal epithelial tissues. In Mus musculus (Mouse), this protein is POU domain, class 2, transcription factor 3 (Pou2f3).